Consider the following 289-residue polypeptide: Ubiquinone biosynthesis O-methyltransferase (289 aa).

Position 36 (Arg36) interacts with S-adenosyl-L-methionine. Residues Arg50–Asn98 enclose the RPE1 insert domain. S-adenosyl-L-methionine is bound by residues Gly109, Asp130, and Leu172.

This sequence belongs to the methyltransferase superfamily. UbiG/COQ3 family.

It carries out the reaction a 3-demethylubiquinol + S-adenosyl-L-methionine = a ubiquinol + S-adenosyl-L-homocysteine + H(+). It catalyses the reaction a 3-(all-trans-polyprenyl)benzene-1,2-diol + S-adenosyl-L-methionine = a 2-methoxy-6-(all-trans-polyprenyl)phenol + S-adenosyl-L-homocysteine + H(+). The protein operates within cofactor biosynthesis; ubiquinone biosynthesis. In terms of biological role, O-methyltransferase that catalyzes the 2 O-methylation steps in the ubiquinone biosynthetic pathway. The polypeptide is Ubiquinone biosynthesis O-methyltransferase (Rickettsia conorii (strain ATCC VR-613 / Malish 7)).